The primary structure comprises 391 residues: Alkanesulfonate monooxygenase (391 aa).

It belongs to the SsuD family.

The catalysed reaction is an alkanesulfonate + FMNH2 + O2 = an aldehyde + FMN + sulfite + H2O + 2 H(+). Catalyzes the desulfonation of aliphatic sulfonates. The protein is Alkanesulfonate monooxygenase of Methylorubrum extorquens (strain CM4 / NCIMB 13688) (Methylobacterium extorquens).